The primary structure comprises 311 residues: MQPKVRTAEIVKQFNLKIVTGEEGLHRPILTADLCRPGLVLAGYYAYYPAERLQILGKTELTFFNNLTYEEQLERANVLCTDETPGILITRGFDVPEAIVKAADETNVPLLTTKGHTTSVESQITNFLEAELAPTTAMHGVLVDIYGVGVFIKGASGVGKSETALELVKRGHRLVADDSVEIRQTGDGILVGTAPKLIQHLLEIRGIGIIDVMTLFGAGAVRSHKKISLVCNLEIWDQAKVYDRVGLDQETLQIIDTEIPFLTIPVRPGRNLAVIIEVAAMNYRLKNMGINTAEEFAGRLAQAIEDGNGGL.

Residues H139 and K160 contribute to the active site. Position 154–161 (154–161 (GASGVGKS)) interacts with ATP. Mg(2+) is bound at residue S161. Residue D178 is the Proton acceptor; for phosphorylation activity. Proton donor; for dephosphorylation activity of the active site. An important for the catalytic mechanism of both phosphorylation and dephosphorylation region spans residues 202–211 (LEIRGIGIID). Position 203 (E203) interacts with Mg(2+). R244 is an active-site residue. Residues 265–270 (PVRPGR) are important for the catalytic mechanism of dephosphorylation.

Belongs to the HPrK/P family. In terms of assembly, homohexamer. It depends on Mg(2+) as a cofactor.

It catalyses the reaction [HPr protein]-L-serine + ATP = [HPr protein]-O-phospho-L-serine + ADP + H(+). The enzyme catalyses [HPr protein]-O-phospho-L-serine + phosphate + H(+) = [HPr protein]-L-serine + diphosphate. Catalyzes the ATP- as well as the pyrophosphate-dependent phosphorylation of a specific serine residue in HPr, a phosphocarrier protein of the phosphoenolpyruvate-dependent sugar phosphotransferase system (PTS). HprK/P also catalyzes the pyrophosphate-producing, inorganic phosphate-dependent dephosphorylation (phosphorolysis) of seryl-phosphorylated HPr (P-Ser-HPr). The two antagonistic activities of HprK/P are regulated by several intracellular metabolites, which change their concentration in response to the absence or presence of rapidly metabolisable carbon sources (glucose, fructose, etc.) in the growth medium. Therefore, by controlling the phosphorylation state of HPr, HPrK/P is a sensor enzyme that plays a major role in the regulation of carbon metabolism and sugar transport: it mediates carbon catabolite repression (CCR), and regulates PTS-catalyzed carbohydrate uptake and inducer exclusion. The polypeptide is HPr kinase/phosphorylase (Exiguobacterium sibiricum (strain DSM 17290 / CCUG 55495 / CIP 109462 / JCM 13490 / 255-15)).